The following is a 231-amino-acid chain: Protein OPG061 (231 aa).

It belongs to the orthopoxvirus OPG058 family.

It is found in the host nucleus. The protein resides in the host nucleolus. This chain is Protein OPG061 (OPG061), found in Variola virus.